Reading from the N-terminus, the 326-residue chain is Tetraacyldisaccharide 4'-kinase (326 aa).

54–61 (SVGGTGKT) is a binding site for ATP.

This sequence belongs to the LpxK family.

The catalysed reaction is a lipid A disaccharide + ATP = a lipid IVA + ADP + H(+). It functions in the pathway glycolipid biosynthesis; lipid IV(A) biosynthesis; lipid IV(A) from (3R)-3-hydroxytetradecanoyl-[acyl-carrier-protein] and UDP-N-acetyl-alpha-D-glucosamine: step 6/6. Its function is as follows. Transfers the gamma-phosphate of ATP to the 4'-position of a tetraacyldisaccharide 1-phosphate intermediate (termed DS-1-P) to form tetraacyldisaccharide 1,4'-bis-phosphate (lipid IVA). In Rickettsia canadensis (strain McKiel), this protein is Tetraacyldisaccharide 4'-kinase.